We begin with the raw amino-acid sequence, 362 residues long: Methylthioribose-1-phosphate isomerase (362 aa).

Substrate-binding positions include 53–55, R90, and Q201; that span reads RGA. D241 acts as the Proton donor in catalysis. 251–252 is a binding site for substrate; it reads NK.

Belongs to the eIF-2B alpha/beta/delta subunits family. MtnA subfamily.

The catalysed reaction is 5-(methylsulfanyl)-alpha-D-ribose 1-phosphate = 5-(methylsulfanyl)-D-ribulose 1-phosphate. Its pathway is amino-acid biosynthesis; L-methionine biosynthesis via salvage pathway; L-methionine from S-methyl-5-thio-alpha-D-ribose 1-phosphate: step 1/6. Functionally, catalyzes the interconversion of methylthioribose-1-phosphate (MTR-1-P) into methylthioribulose-1-phosphate (MTRu-1-P). The protein is Methylthioribose-1-phosphate isomerase of Dechloromonas aromatica (strain RCB).